The following is a 200-amino-acid chain: Nucleoside triphosphate pyrophosphatase (200 aa).

Catalysis depends on aspartate 79, which acts as the Proton acceptor.

Belongs to the Maf family. A divalent metal cation serves as cofactor.

It localises to the cytoplasm. The catalysed reaction is a ribonucleoside 5'-triphosphate + H2O = a ribonucleoside 5'-phosphate + diphosphate + H(+). The enzyme catalyses a 2'-deoxyribonucleoside 5'-triphosphate + H2O = a 2'-deoxyribonucleoside 5'-phosphate + diphosphate + H(+). Its function is as follows. Nucleoside triphosphate pyrophosphatase. May have a dual role in cell division arrest and in preventing the incorporation of modified nucleotides into cellular nucleic acids. This is Nucleoside triphosphate pyrophosphatase from Legionella pneumophila (strain Corby).